We begin with the raw amino-acid sequence, 414 residues long: Probable serine/threonine-protein kinase PBL26 (414 aa).

Cys-3 carries the S-palmitoyl cysteine lipid modification. The span at 17–41 (RDSDNSYRRNGEVTGRDNNKTHPEN) shows a compositional bias: basic and acidic residues. A disordered region spans residues 17–55 (RDSDNSYRRNGEVTGRDNNKTHPENPKTVNEQNKNNDED). Residues 79–356 (FRQECLIGEG…SDVVTALGFL (278 aa)) form the Protein kinase domain. ATP-binding positions include 85–93 (IGEGGFGRV) and Lys-108. Tyr-153 carries the post-translational modification Phosphotyrosine. Asp-206 serves as the catalytic Proton acceptor. Ser-240 carries the post-translational modification Phosphoserine. Thr-246 bears the Phosphothreonine mark. At Tyr-254 the chain carries Phosphotyrosine. The tract at residues 364–394 (ISVPHYDDPPQPSDETSVEDSVAAEERERAV) is disordered.

Belongs to the protein kinase superfamily. Ser/Thr protein kinase family. Post-translationally, palmitoylation at Cys-3 and Cys-6 are required for plasma membrane location.

The protein resides in the cell membrane. The catalysed reaction is L-seryl-[protein] + ATP = O-phospho-L-seryl-[protein] + ADP + H(+). The enzyme catalyses L-threonyl-[protein] + ATP = O-phospho-L-threonyl-[protein] + ADP + H(+). In terms of biological role, may be involved in plant defense signaling. The protein is Probable serine/threonine-protein kinase PBL26 of Arabidopsis thaliana (Mouse-ear cress).